The chain runs to 202 residues: Amelogenin (202 aa).

Residue serine 16 is modified to Phosphoserine. The disordered stretch occupies residues 77–202; sequence QPAPPQQPVM…TDKTKREEVD (126 aa). The segment covering 78-87 has biased composition (pro residues); it reads PAPPQQPVMP. Residues 101–112 are compositionally biased toward low complexity; the sequence is QPNLPQPGQQPY. Positions 113–125 are enriched in pro residues; sequence QPQPAQQPQPHQP. A compositionally biased stretch (low complexity) spans 126–158; that stretch reads IQPIQPIQPIQPMQPMQPMQPMQPMQPMQPQTP. A compositionally biased stretch (pro residues) spans 164–176; the sequence is PLPPQPPLPPMFP.

This sequence belongs to the amelogenin family.

It is found in the secreted. The protein resides in the extracellular space. The protein localises to the extracellular matrix. Plays a role in the biomineralization of teeth. Seems to regulate the formation of crystallites during the secretory stage of tooth enamel development. Thought to play a major role in the structural organization and mineralization of developing enamel. This Monodelphis domestica (Gray short-tailed opossum) protein is Amelogenin (AMEL).